We begin with the raw amino-acid sequence, 315 residues long: Histone-lysine N-methyltransferase SETMAR (315 aa).

In terms of domain architecture, Pre-SET spans 74-137 (PGCACIKTPC…HCRNRVVQSG (64 aa)). Residues C76, C78, C83, C88, C90, C119, C123, C125, and C129 each coordinate Zn(2+). The SET domain maps to 140 to 264 (FLLQVFQTEK…PGEELSYDYS (125 aa)). S-adenosyl-L-methionine contacts are provided by residues 150–152 (KGW), Y193, R221, and 224–225 (NH). Residues C227, C288, C290, and C295 each contribute to the Zn(2+) site. The Post-SET domain maps to 284–300 (PRKPCYCGAQSCATFLP).

Belongs to the class V-like SAM-binding methyltransferase superfamily.

Its subcellular location is the nucleus. It is found in the chromosome. It catalyses the reaction L-lysyl(36)-[histone H3] + 2 S-adenosyl-L-methionine = N(6),N(6)-dimethyl-L-lysyl(36)-[histone H3] + 2 S-adenosyl-L-homocysteine + 2 H(+). Its function is as follows. Histone methyltransferase that methylates 'Lys-4' and 'Lys-36' of histone H3, 2 specific tags for epigenetic transcriptional activation. Specifically mediates dimethylation of H3 'Lys-36'. The sequence is that of Histone-lysine N-methyltransferase SETMAR from Rattus norvegicus (Rat).